A 329-amino-acid polypeptide reads, in one-letter code: Flotillin-like protein FloA (329 aa).

2 helical membrane passes run 4–24 (IAFILIVGAILVFISLFFAIV) and 26–46 (VGLWISAFAANVRVSIFTLIG).

The protein belongs to the flotillin-like FloA family. As to quaternary structure, homooligomerizes.

The protein localises to the cell membrane. The protein resides in the membrane raft. Found in functional membrane microdomains (FMM) that may be equivalent to eukaryotic membrane rafts. FMMs are highly dynamic and increase in number as cells age. Flotillins are thought to be important factors in membrane fluidity. The sequence is that of Flotillin-like protein FloA from Acetivibrio thermocellus (strain ATCC 27405 / DSM 1237 / JCM 9322 / NBRC 103400 / NCIMB 10682 / NRRL B-4536 / VPI 7372) (Clostridium thermocellum).